The following is a 61-amino-acid chain: Metallothionein-2 (61 aa).

At methionine 1 the chain carries N-acetylmethionine. Residues 1-29 (MDPNCSCATDGSCSCAGSCKCKQCKCTSC) form a beta region. A divalent metal cation is bound by residues cysteine 5, cysteine 7, cysteine 13, cysteine 15, cysteine 19, cysteine 21, cysteine 24, cysteine 26, cysteine 29, cysteine 33, cysteine 34, cysteine 36, cysteine 37, cysteine 41, cysteine 44, cysteine 48, cysteine 50, and cysteine 57. The segment at 30-61 (KKSCCSCCPVGCAKCSQGCICKEASDKCSCCA) is alpha. Serine 58 bears the Phosphoserine mark. A divalent metal cation is bound by residues cysteine 59 and cysteine 60.

This sequence belongs to the metallothionein superfamily. Type 1 family.

Functionally, metallothioneins have a high content of cysteine residues that bind various heavy metals; these proteins are transcriptionally regulated by both heavy metals and glucocorticoids. The protein is Metallothionein-2 (Mt2) of Rattus norvegicus (Rat).